Reading from the N-terminus, the 336-residue chain is D-alanine--D-alanine ligase (336 aa).

Residues 124–330 (KMWFSALGIP…FATFLEQAIL (207 aa)) form the ATP-grasp domain. 154–209 (AFDEWGSVFIKAASQGSSVGCFPAHRREDIPGLVRKAFEYAPFVVVEKTIKARELE) is a binding site for ATP. Asp284, Glu297, and Asn299 together coordinate Mg(2+).

The protein belongs to the D-alanine--D-alanine ligase family. Requires Mg(2+) as cofactor. Mn(2+) serves as cofactor.

Its subcellular location is the cytoplasm. It catalyses the reaction 2 D-alanine + ATP = D-alanyl-D-alanine + ADP + phosphate + H(+). It participates in cell wall biogenesis; peptidoglycan biosynthesis. Cell wall formation. In Shewanella amazonensis (strain ATCC BAA-1098 / SB2B), this protein is D-alanine--D-alanine ligase.